A 103-amino-acid chain; its full sequence is Large ribosomal subunit protein bL21 (103 aa).

The protein belongs to the bacterial ribosomal protein bL21 family. Part of the 50S ribosomal subunit. Contacts protein L20.

Its function is as follows. This protein binds to 23S rRNA in the presence of protein L20. The protein is Large ribosomal subunit protein bL21 of Rhodococcus erythropolis (strain PR4 / NBRC 100887).